The chain runs to 260 residues: UPF0246 protein BamMC406_2140 (260 aa).

The protein belongs to the UPF0246 family.

This Burkholderia ambifaria (strain MC40-6) protein is UPF0246 protein BamMC406_2140.